Reading from the N-terminus, the 446-residue chain is Na(+)-translocating NADH-quinone reductase subunit A (446 aa).

The protein belongs to the NqrA family. As to quaternary structure, composed of six subunits; NqrA, NqrB, NqrC, NqrD, NqrE and NqrF.

The catalysed reaction is a ubiquinone + n Na(+)(in) + NADH + H(+) = a ubiquinol + n Na(+)(out) + NAD(+). In terms of biological role, NQR complex catalyzes the reduction of ubiquinone-1 to ubiquinol by two successive reactions, coupled with the transport of Na(+) ions from the cytoplasm to the periplasm. NqrA to NqrE are probably involved in the second step, the conversion of ubisemiquinone to ubiquinol. This chain is Na(+)-translocating NADH-quinone reductase subunit A, found in Vibrio anguillarum (Listonella anguillarum).